The sequence spans 448 residues: MSNESFPETLENLLSTLQTKQQNAIQSEVIEWLHSFCETFHLKIHCHKQFIPSGEKKRAKIPAQEIQGNTQPSHHVHRVVLSRAQPVKAQESLLTTMCNGLVLDANTWTCLAIPPPAPFQQATRQVQHFYRNNFYEVVPIQDGTLLTIYYWDDPEHGPSWCLASTHGYDVSNYCWIGDKTFAELVYELLQQHSTCDVTLEKNKTRGTRLFFNNLNPDYCYTIGIRHHNLQPLIYDPQNIWAIQSTNLKTLKTVYPEYYGYIGIPGIQSQVPELPQYDLPYLIRSYKTAMNQAKNAIKNGKKDKEYFNYGYLLISRAPAITKSTSNVLLKSPLLVFLQKSVYQKKHNISNSQRLEFIILQNYLMQHFRDHFIALFPQYISYYTKYQNMLNMIIHSIATKDKDHPFAGAVVKKVLEDIENAENIIDHTTIQNYAHQSKYAMLYLSIISHF.

Belongs to the asfivirus M448R family.

The protein resides in the virion. The polypeptide is Putative RNA-ligase (Ornithodoros (relapsing fever ticks)).